The primary structure comprises 455 residues: Kynurenine--oxoglutarate transaminase 3 (455 aa).

Glycine 72 is a substrate binding site. An N6-acetyllysine; alternate modification is found at lysine 117. Position 117 is an N6-succinyllysine; alternate (lysine 117). Asparagine 219 provides a ligand contact to substrate. N6-(pyridoxal phosphate)lysine is present on lysine 281. Arginine 430 provides a ligand contact to substrate.

Belongs to the class-I pyridoxal-phosphate-dependent aminotransferase family. In terms of assembly, homodimer. Requires pyridoxal 5'-phosphate as cofactor. As to expression, widely expressed, with higher expression levels in liver, kidney, heart and neuroendocrine tissues.

It catalyses the reaction L-kynurenine + 2-oxoglutarate = kynurenate + L-glutamate + H2O. The enzyme catalyses L-kynurenine + glyoxylate = kynurenate + glycine + H2O. It carries out the reaction 3-hydroxy-L-kynurenine + glyoxylate = xanthurenate + glycine + H2O. The catalysed reaction is an S-substituted L-cysteine + H2O = a thiol + pyruvate + NH4(+). Its pathway is amino-acid degradation; L-kynurenine degradation; kynurenate from L-kynurenine: step 1/2. With respect to regulation, kynurenine transamination is competitively inhibited by cysteine, glutamine, histidine, methionine, leucine, or phenylalanine. Functionally, catalyzes the irreversible transamination of the L-tryptophan metabolite L-kynurenine to form kynurenic acid (KA), an intermediate in the tryptophan catabolic pathway which is also a broad spectrum antagonist of the three ionotropic excitatory amino acid receptors among others. May catalyze the beta-elimination of S-conjugates and Se-conjugates of L-(seleno)cysteine, resulting in the cleavage of the C-S or C-Se bond. Has transaminase activity towards L-kynurenine, tryptophan, phenylalanine, serine, cysteine, methionine, histidine, glutamine and asparagine with glyoxylate as an amino group acceptor (in vitro). Has lower activity with 2-oxoglutarate as amino group acceptor (in vitro). The protein is Kynurenine--oxoglutarate transaminase 3 (Kyat3) of Mus musculus (Mouse).